The following is a 210-amino-acid chain: Guanylate kinase (210 aa).

A Guanylate kinase-like domain is found at 5-183; it reads GILFVISAPS…AVEEFKSIIL (179 aa). Position 12–19 (12–19) interacts with ATP; the sequence is APSGAGKT.

It belongs to the guanylate kinase family.

It localises to the cytoplasm. The catalysed reaction is GMP + ATP = GDP + ADP. Essential for recycling GMP and indirectly, cGMP. In Syntrophotalea carbinolica (strain DSM 2380 / NBRC 103641 / GraBd1) (Pelobacter carbinolicus), this protein is Guanylate kinase.